A 953-amino-acid chain; its full sequence is Serine-aspartate repeat-containing protein C (953 aa).

The N-terminal stretch at 1 to 50 is a signal peptide; it reads MNNKKTATNRKGMIPNRLNKFSIRKYSVGTASILVGTTLIFGLSGHEAKA. Residues 51-160 are disordered; sequence AEHTNGELNQ…AKNVSTTPKT (110 aa). The interval 51–495 is ligand binding A region; the sequence is AEHTNGELNQ…GSSTANGDQK (445 aa). A compositionally biased stretch (polar residues) spans 56-71; sequence GELNQSKNETTAPSEN. The segment covering 72 to 83 has biased composition (basic and acidic residues); that stretch reads KTTEKVDSRQLK. The span at 84-114 shows a compositional bias: polar residues; it reads DNTQTATADQPKVTMSDSATVKETSSNMQSP. Low complexity predominate over residues 115-132; that stretch reads QNATASQSTTQTSNVTTN. A compositionally biased stretch (polar residues) spans 133–160; sequence DKSSTTYSNETDKSNLTQAKNVSTTPKT. CNA-B domains lie at 496–606 and 607–717; these read KYNL…YKTP and KYSL…EEET. Residues 678 to 933 are disordered; that stretch reads TQTGTNTTED…NNSNNGTLFG (256 aa). Acidic residues-rich tracts occupy residues 685–695 and 712–892; these read TEDDKDADGGE and YYEE…DSDS. The LPXTG sorting signal signature appears at 916-920; sequence LPETG. The segment covering 918–933 has biased composition (low complexity); that stretch reads ETGSENNNSNNGTLFG. Thr919 bears the Pentaglycyl murein peptidoglycan amidated threonine mark. A propeptide spans 920 to 953 (removed by sortase); sequence GSENNNSNNGTLFGGLFAALGSLLLFGRRKKQNK.

It belongs to the serine-aspartate repeat-containing protein (SDr) family. Homodimerizes; via N2-Domain. Interacts with host NRXN1; this interaction mediates bacterial attachment to host cells.

Its subcellular location is the secreted. The protein localises to the cell wall. Its function is as follows. Cell surface-associated calcium-binding protein which plays an important role in adhesion and pathogenesis. Mediates interactions with components of the extracellular matrix such as host NRXN1 to promote bacterial adhesion. The sequence is that of Serine-aspartate repeat-containing protein C (sdrC) from Staphylococcus aureus (strain Mu50 / ATCC 700699).